We begin with the raw amino-acid sequence, 134 residues long: Mini-ribonuclease 3 (134 aa).

D23 is an active-site residue.

The protein belongs to the MrnC RNase family. Homodimer. It depends on Mg(2+) as a cofactor.

The protein localises to the cytoplasm. Its function is as follows. Involved in correct processing of both the 5' and 3' ends of 23S rRNA precursor. Processes 30S rRNA precursor transcript even in absence of ribonuclease 3 (Rnc); Rnc processes 30S rRNA into smaller rRNA precursors. This is Mini-ribonuclease 3 from Brevibacillus brevis (strain 47 / JCM 6285 / NBRC 100599).